The following is a 293-amino-acid chain: Formamidopyrimidine-DNA glycosylase (293 aa).

Proline 2 serves as the catalytic Schiff-base intermediate with DNA. The active-site Proton donor is glutamate 3. Catalysis depends on lysine 61, which acts as the Proton donor; for beta-elimination activity. 3 residues coordinate DNA: histidine 104, arginine 123, and lysine 169. The FPG-type zinc finger occupies 255–289; that stretch reads DAYGREGEPCRRCGAIMRRDKFMNRSSFYCPRCQP. The active-site Proton donor; for delta-elimination activity is the arginine 279.

This sequence belongs to the FPG family. As to quaternary structure, monomer. Zn(2+) serves as cofactor.

The enzyme catalyses Hydrolysis of DNA containing ring-opened 7-methylguanine residues, releasing 2,6-diamino-4-hydroxy-5-(N-methyl)formamidopyrimidine.. The catalysed reaction is 2'-deoxyribonucleotide-(2'-deoxyribose 5'-phosphate)-2'-deoxyribonucleotide-DNA = a 3'-end 2'-deoxyribonucleotide-(2,3-dehydro-2,3-deoxyribose 5'-phosphate)-DNA + a 5'-end 5'-phospho-2'-deoxyribonucleoside-DNA + H(+). Its function is as follows. Involved in base excision repair of DNA damaged by oxidation or by mutagenic agents. Acts as a DNA glycosylase that recognizes and removes damaged bases. Has a preference for oxidized purines, such as 7,8-dihydro-8-oxoguanine (8-oxoG). Has AP (apurinic/apyrimidinic) lyase activity and introduces nicks in the DNA strand. Cleaves the DNA backbone by beta-delta elimination to generate a single-strand break at the site of the removed base with both 3'- and 5'-phosphates. This is Formamidopyrimidine-DNA glycosylase from Mycolicibacterium vanbaalenii (strain DSM 7251 / JCM 13017 / BCRC 16820 / KCTC 9966 / NRRL B-24157 / PYR-1) (Mycobacterium vanbaalenii).